Here is a 198-residue protein sequence, read N- to C-terminus: MSEFFWDVQKIQEISNVEEHSVVKCVTVNTSRLISQLNEELQDEESGVNFIVTQLQLLINNVYEKIQKSPGVPAHRSLMINLNFTRLKFSIAYWDILLERSLDLINGPSKTGARYFITEVTPVDRSRYVENNQYFLAFKANQRLTRNSVDMDEFIDFEILIKQIIFDLFKKNGIPDQDFEAILSRFHNLESLVVAFNE.

Necessary for efficient spore formation. This Saccharomyces cerevisiae (strain ATCC 204508 / S288c) (Baker's yeast) protein is Sporulation-specific protein 16 (SPO16).